Here is a 156-residue protein sequence, read N- to C-terminus: Small ribosomal subunit protein uS7 (156 aa).

This sequence belongs to the universal ribosomal protein uS7 family. In terms of assembly, part of the 30S ribosomal subunit. Contacts proteins S9 and S11.

One of the primary rRNA binding proteins, it binds directly to 16S rRNA where it nucleates assembly of the head domain of the 30S subunit. Is located at the subunit interface close to the decoding center, probably blocks exit of the E-site tRNA. This chain is Small ribosomal subunit protein uS7, found in Colwellia psychrerythraea (strain 34H / ATCC BAA-681) (Vibrio psychroerythus).